The primary structure comprises 128 residues: Pi-hexatoxin-Hi1c (128 aa).

The N-terminal stretch at 1–19 (MKLRITLALTSVLAFCVFG) is a signal peptide. A propeptide spanning residues 20-47 (DKENENLMENLLEDDLLDIFTDAIHMER) is cleaved from the precursor. Disulfide bonds link C54/C69, C61/C74, C68/C84, C93/C108, C100/C113, and C107/C124. Domain repeat units lie at residues 54-84 (CIAK…HEVC) and 93-124 (CLEK…HPVC). A 2 X approximate repeats with cysteine pattern C-C-CC-C-C region spans residues 54–124 (CIAKWKSCAG…ERRGNKHPVC (71 aa)).

The protein belongs to the psalmotoxin-1 family. Double-knot toxin subfamily. In terms of tissue distribution, expressed by the venom gland.

It localises to the secreted. Functionally, this toxin potently and selectively inhibits ASIC1a, an isoform of the gene ASIC1. It incompletely inhibits ASIC1a activation in a pH-independent and slowly reversible manner. This toxin acts by binding to and stabilizing the closed state of the channel, thereby impeding the transition into a conducting state. This toxin may bind to the acidic pocket of ASIC1a, since mutation of a key residue of this pocket (Arg-350) abolishes the ability of the toxin to inhibit ASIC1a. In vivo, this toxin protects the brain from neuronal injury when administered up to 8 hours after stroke onset. In Hadronyche infensa (Fraser island funnel-web spider), this protein is Pi-hexatoxin-Hi1c.